Consider the following 338-residue polypeptide: Oligopeptide transport ATP-binding protein OppD (338 aa).

The 251-residue stretch at Leu-7 to Leu-257 folds into the ABC transporter domain. Gly-43–Ser-50 provides a ligand contact to ATP.

This sequence belongs to the ABC transporter superfamily. The complex is composed of two ATP-binding proteins (OppD and OppF), two transmembrane proteins (OppB and OppC) and a solute-binding protein (OppA).

The protein localises to the cell membrane. It catalyses the reaction a [peptide](out) + ATP + H2O = a [peptide](in) + ADP + phosphate + H(+). Functionally, part of the ABC transporter complex OppABCDF involved in the uptake of oligopeptides. Probably responsible for energy coupling to the transport system. Essential for uptake of peptides larger than three amino acids and for growth in milk. This is Oligopeptide transport ATP-binding protein OppD from Lactococcus lactis subsp. cremoris (strain SK11).